A 210-amino-acid polypeptide reads, in one-letter code: MLTANKLLPQGHGLAPVLLKRAATVELDWDVRQKSRFAATDSTGRELGVFLPRGTVVRGGDVLVAEDGSMVRVVAAPQAVLRITHCTQHGSPFDLTRAAYHLGNRHVPIELRPDHLQIEPDHVLADMLRAMHLIVTEQQAPFEPEGGAYAAGGHGHGHDHPHHDHGHDHAHAHAHGTEACDHEHSHDHDCGHHHDHGQDYGHAHPHSLAR.

Residues 144 to 210 (PEGGAYAAGG…GHAHPHSLAR (67 aa)) are disordered. Basic and acidic residues predominate over residues 156 to 202 (HGHDHPHHDHGHDHAHAHAHGTEACDHEHSHDHDCGHHHDHGQDYGH).

It belongs to the UreE family.

It localises to the cytoplasm. Involved in urease metallocenter assembly. Binds nickel. Probably functions as a nickel donor during metallocenter assembly. The polypeptide is Urease accessory protein UreE (Paracidovorax citrulli (strain AAC00-1) (Acidovorax citrulli)).